The following is a 241-amino-acid chain: Lactate utilization protein C (241 aa).

The protein belongs to the LutC/YkgG family.

Its function is as follows. Is involved in L-lactate degradation and allows cells to grow with lactate as the sole carbon source. In Geobacillus sp. (strain WCH70), this protein is Lactate utilization protein C.